Here is a 975-residue protein sequence, read N- to C-terminus: Ionotropic receptor 21a (975 aa).

Residues 1–21 (MFKRIVLAVINLVFLIVSTTA) form the signal peptide. N-linked (GlcNAc...) asparagine glycans are attached at residues Asn67, Asn177, and Asn355. Residues 433–453 (WPVWVAVILIYLLAIFPLAFS) form a helical membrane-spanning segment. The N-linked (GlcNAc...) asparagine glycan is linked to Asn464. A helical membrane pass occupies residues 505–525 (IYWVFTIIITACYTGSIIAFI). N-linked (GlcNAc...) asparagine glycans are attached at residues Asn561, Asn586, and Asn611. Residues 708-728 (MFLLMLFGYVVALGVLISEWV) traverse the membrane as a helical segment. Disordered stretches follow at residues 757–839 (ATAG…HSLS) and 911–938 (SPHS…RKEM). Composition is skewed to polar residues over residues 760–777 (GSDN…TNRN) and 788–800 (VENS…NGSA). N-linked (GlcNAc...) asparagine glycans are attached at residues Asn763 and Asn797.

This sequence belongs to the glutamate-gated ion channel (TC 1.A.10.1) family. In terms of tissue distribution, in both female and male antenna, expressed specifically in 3 sensory neurons of flagellomere 13 segment (at protein level).

It localises to the cell projection. Its subcellular location is the cilium membrane. Its function is as follows. Integral part of a neural sensory system in the antenna that provides the neural basis for the response to environmental changes in temperature (thermosensation). Specifically, required for thermosensing by the cooling cell. Plays a role in heat seeking and heat-stimulated blood feeding behavior. The protein is Ionotropic receptor 21a of Anopheles gambiae (African malaria mosquito).